Here is a 285-residue protein sequence, read N- to C-terminus: Ribosomal RNA small subunit methyltransferase I (285 aa).

This sequence belongs to the methyltransferase superfamily. RsmI family.

Its subcellular location is the cytoplasm. It carries out the reaction cytidine(1402) in 16S rRNA + S-adenosyl-L-methionine = 2'-O-methylcytidine(1402) in 16S rRNA + S-adenosyl-L-homocysteine + H(+). In terms of biological role, catalyzes the 2'-O-methylation of the ribose of cytidine 1402 (C1402) in 16S rRNA. The chain is Ribosomal RNA small subunit methyltransferase I from Mycobacterium tuberculosis (strain CDC 1551 / Oshkosh).